The primary structure comprises 120 residues: MFLLYEYDIFWAFLIISSAIPVLAFLISGVLSPIRKGPEKLSSYESGIEPIGDAWLQFRIRYYMFALVFVVFDVETVFLYPWAMSFDVLGVSAFIEALIFVLILILGLVYAWRKGALEWS.

A run of 3 helical transmembrane segments spans residues Ile-9–Gly-29, Met-64–Met-84, and Val-88–Leu-108.

It belongs to the complex I subunit 3 family. As to quaternary structure, NDH is composed of at least 16 different subunits, 5 of which are encoded in the nucleus.

Its subcellular location is the plastid. It is found in the chloroplast thylakoid membrane. The enzyme catalyses a plastoquinone + NADH + (n+1) H(+)(in) = a plastoquinol + NAD(+) + n H(+)(out). It catalyses the reaction a plastoquinone + NADPH + (n+1) H(+)(in) = a plastoquinol + NADP(+) + n H(+)(out). NDH shuttles electrons from NAD(P)H:plastoquinone, via FMN and iron-sulfur (Fe-S) centers, to quinones in the photosynthetic chain and possibly in a chloroplast respiratory chain. The immediate electron acceptor for the enzyme in this species is believed to be plastoquinone. Couples the redox reaction to proton translocation, and thus conserves the redox energy in a proton gradient. The protein is NAD(P)H-quinone oxidoreductase subunit 3, chloroplastic of Olimarabidopsis pumila (Dwarf rocket).